Consider the following 428-residue polypeptide: MSSVVVVGTQWGDEGKGKITDFLSENAEVIARYQGGNNAGHTIVFNGEKYKLHLIPSGIFYKDKICVIGNGMVVDPKALVAELKYLHDRGISTDNLRISNRAHVILPYHLKLDELEEERKGANKIGTTKKGIGPAYMDKAARVGIRIVDLLDREVFEEKLARNLQEKNVLFEKVYGVEGFKLEDILDEYYEYGQQIAKYVCDTSVVLNNALDEGRRVLFEGAQGVMLDIDQGTYPFVTSSNPVAGGVTIGAGVGPTKIKHVVGVAKAYTTRVGDGPFPTELHDEIGDRIREVGREYGTTTGRPRRVGWFDSVVVRHARRVSGITDLSLNSIDVLTGIETLKICVAYRYKGKVIEEFPASLKVLAECEPIYEELPGWSEDITGVKSLDELPVNARHYVERISQLTGIPLSIFSVGPDRSQTNVVRSVYA.

Residues 12–18 (GDEGKGK) and 40–42 (GHT) contribute to the GTP site. The active-site Proton acceptor is Asp-13. Positions 13 and 40 each coordinate Mg(2+). Residues 13-16 (DEGK), 38-41 (NAGH), Thr-128, Arg-142, Gln-223, Thr-238, and Arg-302 contribute to the IMP site. His-41 serves as the catalytic Proton donor. A substrate-binding site is contributed by 298-304 (TTTGRPR). Residues Arg-304, 330–332 (SID), and 412–414 (SVG) each bind GTP.

Belongs to the adenylosuccinate synthetase family. In terms of assembly, homodimer. It depends on Mg(2+) as a cofactor.

It localises to the cytoplasm. The enzyme catalyses IMP + L-aspartate + GTP = N(6)-(1,2-dicarboxyethyl)-AMP + GDP + phosphate + 2 H(+). Its pathway is purine metabolism; AMP biosynthesis via de novo pathway; AMP from IMP: step 1/2. Plays an important role in the de novo pathway of purine nucleotide biosynthesis. Catalyzes the first committed step in the biosynthesis of AMP from IMP. This chain is Adenylosuccinate synthetase, found in Geobacillus sp. (strain WCH70).